We begin with the raw amino-acid sequence, 374 residues long: 5-methylthioribulose-1-phosphate isomerase (374 aa).

The protein belongs to the RuBisCO large chain family. Type IV subfamily.

It carries out the reaction 5-(methylsulfanyl)-D-ribulose 1-phosphate = S-methyl-1-thio-D-xylulose 5-phosphate. The enzyme catalyses 5-(methylsulfanyl)-D-ribulose 1-phosphate = 1-(methylsulfanyl)ribulose 5-phosphate. The protein operates within amino-acid biosynthesis; L-methionine biosynthesis via salvage pathway. Its pathway is metabolic intermediate biosynthesis; 1-deoxy-D-xylulose 5-phosphate biosynthesis. Functionally, catalyzes the conversion of 5-methylthio-D-ribulose 1-phosphate (MTRu-1P) to a 3:1 mixture of 1-methylthioxylulose 5-phosphate (MTXu-5P) and 1-methylthioribulose 5-phosphate (MTRu-5P). Involved in the MTA-isoprenoid shunt of the methionine salvage pathway. The chain is 5-methylthioribulose-1-phosphate isomerase from Rhodospirillum rubrum (strain ATCC 11170 / ATH 1.1.1 / DSM 467 / LMG 4362 / NCIMB 8255 / S1).